The sequence spans 406 residues: Arginine biosynthesis bifunctional protein ArgJ (406 aa).

Residues Thr-152, Lys-179, Thr-190, Glu-277, Asn-401, and Ser-406 each coordinate substrate. The active-site Nucleophile is the Thr-190.

Belongs to the ArgJ family. As to quaternary structure, heterotetramer of two alpha and two beta chains.

Its subcellular location is the cytoplasm. The enzyme catalyses N(2)-acetyl-L-ornithine + L-glutamate = N-acetyl-L-glutamate + L-ornithine. It carries out the reaction L-glutamate + acetyl-CoA = N-acetyl-L-glutamate + CoA + H(+). It functions in the pathway amino-acid biosynthesis; L-arginine biosynthesis; L-ornithine and N-acetyl-L-glutamate from L-glutamate and N(2)-acetyl-L-ornithine (cyclic): step 1/1. Its pathway is amino-acid biosynthesis; L-arginine biosynthesis; N(2)-acetyl-L-ornithine from L-glutamate: step 1/4. Catalyzes two activities which are involved in the cyclic version of arginine biosynthesis: the synthesis of N-acetylglutamate from glutamate and acetyl-CoA as the acetyl donor, and of ornithine by transacetylation between N(2)-acetylornithine and glutamate. This Neisseria gonorrhoeae protein is Arginine biosynthesis bifunctional protein ArgJ.